The primary structure comprises 393 residues: Protein TsgA (393 aa).

12 helical membrane-spanning segments follow: residues 11–31, 51–71, 78–98, 101–121, 134–154, 162–182, 206–226, 245–265, 273–293, 298–318, 332–352, and 361–381; these read WISF…GMVM, FLNA…EIVP, FGFI…SLAL, AAMF…TFLI, LLFT…VAAF, WYWV…LTFG, IGVL…LGFI, ALVS…SFIL, ILTV…TGTQ, WFIL…ITLG, FILT…GPIV, and LLTA…LGFV.

The protein belongs to the major facilitator superfamily. TsgA family.

It is found in the cell inner membrane. In Salmonella gallinarum (strain 287/91 / NCTC 13346), this protein is Protein TsgA.